The following is a 151-amino-acid chain: MSLSDADKKALDASWKKLTAGADGKKNAGINLVLWMFANVPNMRAQFSKFNANQSDDALKGDAEFIKQVNVIVAALDGLLQSVNNPGQLQANLDKLAKSHVNLKIGLEFFGPLQQNIHSFIESALGVGAGSDEPKAWGNLIAAFNETLKKA.

One can recognise a Globin domain in the interval 2–151 (SLSDADKKAL…AAFNETLKKA (150 aa)). His-100 lines the heme b pocket.

It belongs to the globin family.

The polypeptide is Globin (Biomphalaria glabrata (Bloodfluke planorb)).